Reading from the N-terminus, the 236-residue chain is Uridylate kinase (236 aa).

10 to 13 (KLSG) lines the ATP pocket. Glycine 52 serves as a coordination point for UMP. Residues glycine 53 and arginine 57 each coordinate ATP. Residues aspartate 72 and 133-140 (TGNPFFTT) contribute to the UMP site. Residues threonine 160, tyrosine 166, and aspartate 169 each contribute to the ATP site.

Belongs to the UMP kinase family. As to quaternary structure, homohexamer.

The protein resides in the cytoplasm. It catalyses the reaction UMP + ATP = UDP + ADP. It participates in pyrimidine metabolism; CTP biosynthesis via de novo pathway; UDP from UMP (UMPK route): step 1/1. Inhibited by UTP. Functionally, catalyzes the reversible phosphorylation of UMP to UDP. In Bacteroides thetaiotaomicron (strain ATCC 29148 / DSM 2079 / JCM 5827 / CCUG 10774 / NCTC 10582 / VPI-5482 / E50), this protein is Uridylate kinase.